The following is a 368-amino-acid chain: Phosphoserine aminotransferase (368 aa).

Arg-44 lines the L-glutamate pocket. Pyridoxal 5'-phosphate is bound by residues 78-79 (AT), Trp-104, Thr-157, Asp-179, and Gln-202. Position 203 is an N6-(pyridoxal phosphate)lysine (Lys-203). A pyridoxal 5'-phosphate-binding site is contributed by 244 to 245 (NT).

This sequence belongs to the class-V pyridoxal-phosphate-dependent aminotransferase family. SerC subfamily. In terms of assembly, homodimer. Requires pyridoxal 5'-phosphate as cofactor.

The protein resides in the cytoplasm. It catalyses the reaction O-phospho-L-serine + 2-oxoglutarate = 3-phosphooxypyruvate + L-glutamate. The catalysed reaction is 4-(phosphooxy)-L-threonine + 2-oxoglutarate = (R)-3-hydroxy-2-oxo-4-phosphooxybutanoate + L-glutamate. It functions in the pathway amino-acid biosynthesis; L-serine biosynthesis; L-serine from 3-phospho-D-glycerate: step 2/3. It participates in cofactor biosynthesis; pyridoxine 5'-phosphate biosynthesis; pyridoxine 5'-phosphate from D-erythrose 4-phosphate: step 3/5. Functionally, catalyzes the reversible conversion of 3-phosphohydroxypyruvate to phosphoserine and of 3-hydroxy-2-oxo-4-phosphonooxybutanoate to phosphohydroxythreonine. This is Phosphoserine aminotransferase from Neisseria meningitidis serogroup C / serotype 2a (strain ATCC 700532 / DSM 15464 / FAM18).